The following is a 319-amino-acid chain: Ornithine carbamoyltransferase (319 aa).

Residues 57–60, Gln84, Arg108, and 135–138 contribute to the carbamoyl phosphate site; these read STRT and HPCQ. L-ornithine-binding positions include Asn166, Asp230, and 234-235; that span reads SM. Residues 270 to 271 and Arg298 each bind carbamoyl phosphate; that span reads CL.

This sequence belongs to the aspartate/ornithine carbamoyltransferase superfamily. OTCase family.

The protein resides in the cytoplasm. The enzyme catalyses carbamoyl phosphate + L-ornithine = L-citrulline + phosphate + H(+). It participates in amino-acid biosynthesis; L-arginine biosynthesis; L-arginine from L-ornithine and carbamoyl phosphate: step 1/3. Functionally, reversibly catalyzes the transfer of the carbamoyl group from carbamoyl phosphate (CP) to the N(epsilon) atom of ornithine (ORN) to produce L-citrulline. In Bacillus subtilis (strain 168), this protein is Ornithine carbamoyltransferase (argF).